Here is a 390-residue protein sequence, read N- to C-terminus: Putative transposase y4qE (390 aa).

Belongs to the transposase IS1111A/IS1328/IS1533 family.

This Sinorhizobium fredii (strain NBRC 101917 / NGR234) protein is Putative transposase y4qE.